A 683-amino-acid polypeptide reads, in one-letter code: Methionine--tRNA ligase (683 aa).

Residues proline 23 to histidine 33 carry the 'HIGH' region motif. Residues cysteine 154, cysteine 157, cysteine 166, and cysteine 170 each coordinate Zn(2+). The short motif at lysine 335 to serine 339 is the 'KMSKS' region element. Lysine 338 lines the ATP pocket. A tRNA-binding domain is found at aspartate 583–arginine 683.

It belongs to the class-I aminoacyl-tRNA synthetase family. MetG type 1 subfamily. Homodimer. It depends on Zn(2+) as a cofactor.

The protein resides in the cytoplasm. It carries out the reaction tRNA(Met) + L-methionine + ATP = L-methionyl-tRNA(Met) + AMP + diphosphate. In terms of biological role, is required not only for elongation of protein synthesis but also for the initiation of all mRNA translation through initiator tRNA(fMet) aminoacylation. The protein is Methionine--tRNA ligase of Methanocella arvoryzae (strain DSM 22066 / NBRC 105507 / MRE50).